A 383-amino-acid chain; its full sequence is Protein delta homolog 2 (383 aa).

Positions 1–26 (MPSGCRCLHLVCLLCILGAPGQPVRA) are cleaved as a signal peptide. 4 consecutive EGF-like domains span residues 27 to 58 (DDCS…LHCE), 62 to 89 (RMPG…KFCD), 91 to 129 (DEHI…RDCE), and 131 to 172 (KAGP…ARCE). Topologically, residues 27–306 (DDCSSHCDLA…RQEAGLGEPS (280 aa)) are extracellular. 17 disulfides stabilise this stretch: cysteine 29-cysteine 40, cysteine 33-cysteine 46, cysteine 48-cysteine 57, cysteine 66-cysteine 71, cysteine 79-cysteine 88, cysteine 95-cysteine 107, cysteine 101-cysteine 117, cysteine 119-cysteine 128, cysteine 135-cysteine 148, cysteine 142-cysteine 160, cysteine 162-cysteine 171, cysteine 178-cysteine 189, cysteine 183-cysteine 198, cysteine 200-cysteine 209, cysteine 216-cysteine 227, cysteine 221-cysteine 236, and cysteine 238-cysteine 247. N-linked (GlcNAc...) asparagine glycosylation is present at asparagine 157. The region spanning 174-210 (NVDDCLMRPCANGATCLDGINRFSCLCPEGFAGRFCT) is the EGF-like 5; calcium-binding domain. The EGF-like 6; calcium-binding domain maps to 212–248 (NLDDCASRPCQRGARCRDRVHDFDCLCPSGYGGKTCE). Residues 307–327 (LVALVVFGALTAALVLATVLL) form a helical membrane-spanning segment. The Cytoplasmic portion of the chain corresponds to 328–383 (TLRAWRRGVCPPGPCCYPAPHYAPACQDQECQVSMLPAGLPLPRDLPPEPGKTTAL).

The protein resides in the membrane. Functionally, regulates adipogenesis. The sequence is that of Protein delta homolog 2 (DLK2) from Homo sapiens (Human).